The chain runs to 342 residues: DNA primase small subunit PriS (342 aa).

Catalysis depends on residues D97, D99, and D276.

The protein belongs to the eukaryotic-type primase small subunit family. As to quaternary structure, heterodimer of a small subunit (PriS) and a large subunit (PriL). Mg(2+) is required as a cofactor. Requires Mn(2+) as cofactor.

Its function is as follows. Catalytic subunit of DNA primase, an RNA polymerase that catalyzes the synthesis of short RNA molecules used as primers for DNA polymerase during DNA replication. The small subunit contains the primase catalytic core and has DNA synthesis activity on its own. Binding to the large subunit stabilizes and modulates the activity, increasing the rate of DNA synthesis while decreasing the length of the DNA fragments, and conferring RNA synthesis capability. The DNA polymerase activity may enable DNA primase to also catalyze primer extension after primer synthesis. May also play a role in DNA repair. The polypeptide is DNA primase small subunit PriS (Thermococcus sibiricus (strain DSM 12597 / MM 739)).